The primary structure comprises 349 residues: sn-glycerol-3-phosphate import ATP-binding protein UgpC (349 aa).

The ABC transporter domain maps to 4–235 (ITLKDVHKTY…PATAFVATFI (232 aa)). 37–44 (GPSGCGKS) serves as a coordination point for ATP.

The protein belongs to the ABC transporter superfamily. sn-glycerol-3-phosphate importer (TC 3.A.1.1.3) family. As to quaternary structure, the complex is composed of two ATP-binding proteins (UgpC), two transmembrane proteins (UgpA and UgpE) and a solute-binding protein (UgpB).

It is found in the cell inner membrane. It carries out the reaction sn-glycerol 3-phosphate(out) + ATP + H2O = sn-glycerol 3-phosphate(in) + ADP + phosphate + H(+). Functionally, part of the ABC transporter complex UgpBAEC involved in sn-glycerol-3-phosphate (G3P) import. Responsible for energy coupling to the transport system. The chain is sn-glycerol-3-phosphate import ATP-binding protein UgpC from Rhizobium meliloti (strain 1021) (Ensifer meliloti).